Consider the following 1100-residue polypeptide: Serine/threonine/tyrosine-interacting-like protein 2 (1100 aa).

Positions 1–12 are enriched in polar residues; that stretch reads MASSVEDQQLQQ. Positions 1–21 are disordered; it reads MASSVEDQQLQQEEAESVKDV. The 149-residue stretch at 141 to 289 folds into the Tyrosine-protein phosphatase domain; sequence SPVDEVWPNV…LRQLNETLME (149 aa). Residues 356–374 show a composition bias toward polar residues; sequence CGSQQPNMQQPADQPSLPG. 8 disordered regions span residues 356–383, 411–436, 479–504, 542–561, 575–615, 667–686, 888–1060, and 1075–1100; these read CGSQQPNMQQPADQPSLPGQTREDEDGD, EDEDDGEDKTQRAVRPDDLESVTSED, AAARHRLQDQDTSSETQQKKIDDDVQ, KENAENGEQSEAEPAAAPDL, KQQK…ERSR, VLSGRSTRSLPPAVLETPAP, CEKP…DEEI, and VAEEMEDDEVLTAWRKQEESKSHDHK. The span at 418–428 shows a compositional bias: basic and acidic residues; sequence DKTQRAVRPDD. A compositionally biased stretch (basic and acidic residues) spans 580–615; the sequence is HGGEENKEEILQMSRGEDTATARRRQRREEVLERSR. Over residues 667-676 the composition is skewed to low complexity; that stretch reads VLSGRSTRSL. Residues 888 to 898 are compositionally biased toward basic and acidic residues; the sequence is CEKPKPKRDYG. Composition is skewed to polar residues over residues 907–916, 994–1013, and 1029–1041; these read ASANNPTSSI, SYSSRRSPSFNGLSESTSFA, and FQNHSIKQKSSVY. Basic and acidic residues predominate over residues 1089-1100; the sequence is RKQEESKSHDHK.

Belongs to the protein-tyrosine phosphatase family. Non-receptor class dual specificity subfamily. Expressed in muscle fibers in a regular striated pattern (at protein level).

Its subcellular location is the cytoplasm. The protein localises to the myofibril. It is found in the sarcomere. Functionally, required for myofiber maturation. This chain is Serine/threonine/tyrosine-interacting-like protein 2 (styxl2), found in Danio rerio (Zebrafish).